The following is a 630-amino-acid chain: Glutamyl-tRNA(Gln) amidotransferase subunit E (630 aa).

The protein belongs to the GatB/GatE family. GatE subfamily. As to quaternary structure, heterodimer of GatD and GatE.

It catalyses the reaction L-glutamyl-tRNA(Gln) + L-glutamine + ATP + H2O = L-glutaminyl-tRNA(Gln) + L-glutamate + ADP + phosphate + H(+). In terms of biological role, allows the formation of correctly charged Gln-tRNA(Gln) through the transamidation of misacylated Glu-tRNA(Gln) in organisms which lack glutaminyl-tRNA synthetase. The reaction takes place in the presence of glutamine and ATP through an activated gamma-phospho-Glu-tRNA(Gln). The GatDE system is specific for glutamate and does not act on aspartate. This is Glutamyl-tRNA(Gln) amidotransferase subunit E from Methanocaldococcus jannaschii (strain ATCC 43067 / DSM 2661 / JAL-1 / JCM 10045 / NBRC 100440) (Methanococcus jannaschii).